The chain runs to 271 residues: Protein PXR1 (271 aa).

Disordered regions lie at residues 1-26 (MGLAAARNKQRFGLDPRNTTWSNNTS) and 149-233 (KKRP…DSAA). Residues 17-26 (RNTTWSNNTS) show a composition bias toward polar residues. The G-patch domain occupies 25–71 (TSRFGHKHLEKLGWKPGSGLGLVPDSTTSHIKVSIKDDNLGLGAKLK). Residues 165 to 205 (KKTKKVKKEKKVKKVKKEKKEKKEKKDKKEKKVKKEKKEKK) show a composition bias toward basic residues. The span at 206-230 (EKKLKDKHSKDTNEITRDQMLKPRD) shows a compositional bias: basic and acidic residues.

It belongs to the PINX1 family.

It localises to the nucleus. Its subcellular location is the nucleolus. Its function is as follows. Involved in rRNA-processing at A0, A1 and A2 sites and negatively regulates telomerase. The sequence is that of Protein PXR1 (PXR1) from Kluyveromyces lactis (strain ATCC 8585 / CBS 2359 / DSM 70799 / NBRC 1267 / NRRL Y-1140 / WM37) (Yeast).